A 481-amino-acid chain; its full sequence is Aspartyl/glutamyl-tRNA(Asn/Gln) amidotransferase subunit B (481 aa).

It belongs to the GatB/GatE family. GatB subfamily. Heterotrimer of A, B and C subunits.

It carries out the reaction L-glutamyl-tRNA(Gln) + L-glutamine + ATP + H2O = L-glutaminyl-tRNA(Gln) + L-glutamate + ADP + phosphate + H(+). It catalyses the reaction L-aspartyl-tRNA(Asn) + L-glutamine + ATP + H2O = L-asparaginyl-tRNA(Asn) + L-glutamate + ADP + phosphate + 2 H(+). Its function is as follows. Allows the formation of correctly charged Asn-tRNA(Asn) or Gln-tRNA(Gln) through the transamidation of misacylated Asp-tRNA(Asn) or Glu-tRNA(Gln) in organisms which lack either or both of asparaginyl-tRNA or glutaminyl-tRNA synthetases. The reaction takes place in the presence of glutamine and ATP through an activated phospho-Asp-tRNA(Asn) or phospho-Glu-tRNA(Gln). The chain is Aspartyl/glutamyl-tRNA(Asn/Gln) amidotransferase subunit B from Cellvibrio japonicus (strain Ueda107) (Pseudomonas fluorescens subsp. cellulosa).